The following is a 357-amino-acid chain: Putative ankyrin repeat protein L42 (357 aa).

9 ANK repeats span residues 34 to 63 (SCKQFIGLVCILTNNLNLLNLLVKKGNLKF), 86 to 115 (EQNECLKMSCIHGCLEILKYLISIGVDFRM), 116 to 145 (NDDEPLMLAIENGHLKIVQFLYSKRVNIRA), 147 to 175 (NNRPLVLSCEKGYINIVNFLLDKKASFVS), 176 to 205 (KQNEVFSTACGFGQMDIVKLLVEKGADINV), 206 to 235 (GKIPPIRAAAAGGHLNVIEHLVNKGASINK), 237 to 265 (SVDSLFSAAFYGHLNIVKYLLGYISEVNI), 267 to 294 (YYAFEKACINGHIDIVQYLFSENIITKD), and 301 to 331 (NTRYLFYHTIRNKHKHIIKFLIENNIFDKDK).

This is Putative ankyrin repeat protein L42 from Acanthamoeba polyphaga (Amoeba).